The sequence spans 271 residues: MTPLVKDIIMSSTRMPALFLGHGSPMNVLEDNLYTRSWQKLGMTLPRPQAIVVVSAHWFTRGTGVTAMETPPTIHDFGGFPQALYDTHYPAPGSPALAQRLVELLAPIPVTLDKEAWGFDHGSWGVLIKMYPDADIPMVQLSIDSSKPAAWHFEMGRKLAALRDEGIMLVASGNVVHNLRTVKWHGDSSPYPWATSFNEYVKANLTWQGPVEQHPLVNYLDHEGGTLSNPTPEHYLPLLYVLGAWDGQEPITIPVEGIEMGSLSMLSVQIG.

Positions 22, 57, 177, and 234 each coordinate Zn(2+).

Belongs to the DODA-type extradiol aromatic ring-opening dioxygenase family. Monomer. Zn(2+) is required as a cofactor.

It localises to the cytoplasm. The catalysed reaction is L-dopa + O2 = 4-(L-alanin-3-yl)-2-hydroxy-cis,cis-muconate 6-semialdehyde + H(+). Its function is as follows. In vitro, opens the cyclic ring of dihydroxy-phenylalanine (DOPA) between carbons 4 and 5, thus producing an unstable seco-DOPA that rearranges nonenzymatically to betalamic acid. The physiological substrate is unknown. The chain is 4,5-DOPA dioxygenase extradiol (ygiD) from Escherichia coli (strain K12).